We begin with the raw amino-acid sequence, 199 residues long: Probable GTP-binding protein EngB (199 aa).

The EngB-type G domain occupies Asn-22–Gly-196. GTP is bound by residues Gly-30–Ser-37, Gly-57–Leu-61, Asp-82–Gly-85, Thr-152–Asp-155, and Val-175–Asn-177. Residues Ser-37 and Thr-59 each coordinate Mg(2+).

Belongs to the TRAFAC class TrmE-Era-EngA-EngB-Septin-like GTPase superfamily. EngB GTPase family. Mg(2+) is required as a cofactor.

Functionally, necessary for normal cell division and for the maintenance of normal septation. This Campylobacter jejuni subsp. doylei (strain ATCC BAA-1458 / RM4099 / 269.97) protein is Probable GTP-binding protein EngB.